Consider the following 713-residue polypeptide: Cadherin-13 (713 aa).

An N-terminal signal peptide occupies residues 1–22 (MQPATPLVLCVLLSQVLLLTSA). Residues 23–138 (EDLDCTPGFQ…RTSPVPRQKR (116 aa)) constitute a propeptide that is removed on maturation. N-linked (GlcNAc...) asparagine glycans are attached at residues N52 and N86. 5 consecutive Cadherin domains span residues 139-245 (SIVV…RPIF), 246-363 (REGP…SPKF), 364-477 (TKKE…SPVF), 478-585 (YPDP…APFI), and 584-694 (FIYP…AAGA). The interval 156-178 (PRDVGKVVDSDRPEGSKFRLTGK) is disordered. A compositionally biased stretch (basic and acidic residues) spans 158-172 (DVGKVVDSDRPEGSK). N-linked (GlcNAc...) asparagine glycans are attached at residues N382, N489, N500, N530, N598, N638, and N671. G693 is lipidated: GPI-anchor amidated glycine. Residues 694–713 (APHFSAATALLLSLFSLARL) constitute a propeptide, removed in mature form.

As to quaternary structure, by contrast to classical cadherins, homodimerization in trans is not mediated by cadherin EC1 domain strand-swapping, but instead through a homophilic adhesive interface which joins two elongated EC1-EC2 domains through a region near their Ca2+-binding sites to form a tetrahedral, X-like shape.

Its subcellular location is the cell membrane. The protein resides in the cytoplasm. In terms of biological role, cadherins are calcium-dependent cell adhesion proteins. They preferentially interact with themselves in a homophilic manner in connecting cells; cadherins may thus contribute to the sorting of heterogeneous cell types. May act as a negative regulator of neural cell growth. The sequence is that of Cadherin-13 (CDH13) from Bos taurus (Bovine).